The following is a 200-amino-acid chain: Charged multivesicular body protein 6-A (200 aa).

The N-myristoyl glycine moiety is linked to residue G2. Residues 9–102 (RRSRVTEQDK…FAQIEMKVIE (94 aa)) are a coiled coil. Residues 166 to 200 (EDLELPEAPSEPLPDTIPEKQAVKNKPKPQMIAAS) are disordered. Positions 168-179 (LELPEAPSEPLP) match the Type-2 MIT-interacting motif motif.

Belongs to the SNF7 family. As to quaternary structure, probable core component of the endosomal sorting required for transport complex III (ESCRT-III). ESCRT-III components are thought to multimerize to form a flat lattice on the perimeter membrane of the endosome.

Its subcellular location is the endomembrane system. It is found in the late endosome membrane. In terms of biological role, probable core component of the endosomal sorting required for transport complex III (ESCRT-III) which is involved in multivesicular bodies (MVBs) formation and sorting of endosomal cargo proteins into MVBs. MVBs contain intraluminal vesicles (ILVs) that are generated by invagination and scission from the limiting membrane of the endosome and mostly are delivered to lysosomes enabling degradation of membrane proteins, such as stimulated growth factor receptors, lysosomal enzymes and lipids. In the ESCRT-III complex, it probably serves as an acceptor for the ESCRT-II complex on endosomal membranes. The protein is Charged multivesicular body protein 6-A (chmp6-a) of Xenopus laevis (African clawed frog).